A 444-amino-acid polypeptide reads, in one-letter code: Maintenance of mitochondrial morphology protein 1 (444 aa).

The segment covering 1 to 16 (MKGVENTLSQSESVNR) has biased composition (polar residues). The tract at residues 1–20 (MKGVENTLSQSESVNRGYNG) is disordered. Topologically, residues 1-107 (MKGVENTLSQ…TFSSRSFAEG (107 aa)) are lumenal. The chain crosses the membrane as a helical span at residues 108-128 (LVVGQLSVIVVLIFFIKFFIF). The Cytoplasmic segment spans residues 129-444 (SDGPAKTGGG…QEEDPSRAPE (316 aa)). The segment at 136–157 (GGGGGSSAESRSSGFTGSPLTS) is disordered. Residues 142 to 157 (SAESRSSGFTGSPLTS) are compositionally biased toward low complexity. In terms of domain architecture, SMP-LTD spans 204–418 (SPESLDWFNV…EPRFQFVKLP (215 aa)). Positions 425-444 (KNTREEKSDMQEEDPSRAPE) are disordered. Basic and acidic residues predominate over residues 426–444 (NTREEKSDMQEEDPSRAPE).

Belongs to the MMM1 family. As to quaternary structure, homodimer. Component of the ER-mitochondria encounter structure (ERMES) or MDM complex, composed of MMM1, MDM10, MDM12 and MDM34. An MMM1 homodimer associates with one molecule of MDM12 on each side in a pairwise head-to-tail manner, and the SMP-LTD domains of MMM1 and MDM12 generate a continuous hydrophobic tunnel for phospholipid trafficking.

It is found in the endoplasmic reticulum membrane. Component of the ERMES/MDM complex, which serves as a molecular tether to connect the endoplasmic reticulum (ER) and mitochondria. Components of this complex are involved in the control of mitochondrial shape and protein biogenesis, and function in nonvesicular lipid trafficking between the ER and mitochondria. The MDM12-MMM1 subcomplex functions in the major beta-barrel assembly pathway that is responsible for biogenesis of all outer membrane beta-barrel proteins, and acts in a late step after the SAM complex. The MDM10-MDM12-MMM1 subcomplex further acts in the TOM40-specific pathway after the action of the MDM12-MMM1 complex. Essential for establishing and maintaining the structure of mitochondria and maintenance of mtDNA nucleoids. The chain is Maintenance of mitochondrial morphology protein 1 from Eremothecium gossypii (strain ATCC 10895 / CBS 109.51 / FGSC 9923 / NRRL Y-1056) (Yeast).